Here is a 257-residue protein sequence, read N- to C-terminus: Tryptophan synthase alpha chain (257 aa).

Catalysis depends on proton acceptor residues glutamate 47 and aspartate 58.

The protein belongs to the TrpA family. Tetramer of two alpha and two beta chains.

It catalyses the reaction (1S,2R)-1-C-(indol-3-yl)glycerol 3-phosphate + L-serine = D-glyceraldehyde 3-phosphate + L-tryptophan + H2O. It functions in the pathway amino-acid biosynthesis; L-tryptophan biosynthesis; L-tryptophan from chorismate: step 5/5. The alpha subunit is responsible for the aldol cleavage of indoleglycerol phosphate to indole and glyceraldehyde 3-phosphate. This is Tryptophan synthase alpha chain from Listeria welshimeri serovar 6b (strain ATCC 35897 / DSM 20650 / CCUG 15529 / CIP 8149 / NCTC 11857 / SLCC 5334 / V8).